We begin with the raw amino-acid sequence, 137 residues long: NADH dehydrogenase [ubiquinone] 1 beta subcomplex subunit 7 (137 aa).

Gly2 is lipidated: N-myristoyl glycine. A CHCH domain is found at 56-98 (RDYCAHYLIRFLKCKRDSFPNFLACKHERHDWDYCEHLDYVKR). The Cx9C motif 1 motif lies at 59-69 (CAHYLIRFLKC). 2 cysteine pairs are disulfide-bonded: Cys59/Cys90 and Cys69/Cys80. Ser73 carries the post-translational modification Phosphoserine. The short motif at 80–90 (CKHERHDWDYC) is the Cx9C motif 2 element. The segment at 110-137 (QRKKRREQREADMAKGLGPGEVAPEVAL) is disordered.

Belongs to the complex I NDUFB7 subunit family. As to quaternary structure, complex I is composed of 45 different subunits.

It localises to the mitochondrion inner membrane. The protein resides in the mitochondrion intermembrane space. Its function is as follows. Accessory subunit of the mitochondrial membrane respiratory chain NADH dehydrogenase (Complex I), that is believed not to be involved in catalysis. Complex I functions in the transfer of electrons from NADH to the respiratory chain. The immediate electron acceptor for the enzyme is believed to be ubiquinone. The sequence is that of NADH dehydrogenase [ubiquinone] 1 beta subcomplex subunit 7 (NDUFB7) from Bos taurus (Bovine).